The chain runs to 405 residues: Acetate kinase (405 aa).

Asparagine 7 serves as a coordination point for Mg(2+). Lysine 14 contacts ATP. Substrate is bound at residue arginine 90. The active-site Proton donor/acceptor is aspartate 147. Residues 207-211, 282-284, and 331-335 contribute to the ATP site; these read HLGNG, DFR, and GVGEN. Glutamate 384 serves as a coordination point for Mg(2+).

Belongs to the acetokinase family. Homodimer. Requires Mg(2+) as cofactor. Mn(2+) serves as cofactor.

Its subcellular location is the cytoplasm. It catalyses the reaction acetate + ATP = acetyl phosphate + ADP. It participates in metabolic intermediate biosynthesis; acetyl-CoA biosynthesis; acetyl-CoA from acetate: step 1/2. Catalyzes the formation of acetyl phosphate from acetate and ATP. Can also catalyze the reverse reaction. The chain is Acetate kinase from Clostridium kluyveri (strain ATCC 8527 / DSM 555 / NBRC 12016 / NCIMB 10680 / K1).